A 70-amino-acid polypeptide reads, in one-letter code: Cold shock-like protein CspF (70 aa).

In terms of domain architecture, CSD spans 7–67; the sequence is GIVKTFDGKS…GLRGPSAANV (61 aa).

The protein resides in the cytoplasm. The polypeptide is Cold shock-like protein CspF (cspF) (Escherichia coli (strain K12)).